Consider the following 724-residue polypeptide: Degenerin mec-10 (724 aa).

Residues 1–125 (MNRGPPNPRM…GQAPNSLYRA (125 aa)) are Cytoplasmic-facing. A helical membrane pass occupies residues 126 to 146 (VWVFLLLICAIQFINQAVAVI). At 147–684 (QKYQKMDKIT…FGGHLGLWSG (538 aa)) the chain is on the extracellular side. N-linked (GlcNAc...) asparagine glycans are attached at residues Asn-294, Asn-370, Asn-463, Asn-605, and Asn-624. A helical transmembrane segment spans residues 685 to 705 (VSVMTCCEFVCLVLELLYMAV). Residues 706–724 (THHITQERIRRRENAANEF) are Cytoplasmic-facing.

This sequence belongs to the amiloride-sensitive sodium channel (TC 1.A.6) family. In terms of assembly, the channel is probably composed of at least the mec-2, mec-4, mec-6 and mec-10 subunits.

The protein resides in the cell membrane. Amiloride-sensitive sodium channel subunit required for mechanosensory transduction (touch sensitivity). Negatively regulates the turning step of male mating behavior. The chain is Degenerin mec-10 from Caenorhabditis briggsae.